We begin with the raw amino-acid sequence, 333 residues long: Potassium channel protein 1 (333 aa).

Residues 1–6 (METYEK) are Cytoplasmic-facing. A helical membrane pass occupies residues 7-27 (IELGIIVIILLILIESVILMT). Topologically, residues 28–60 (VEGWDFFTAFYTAVVTISTVGYGDYTPQTFLGK) are extracellular. A Selectivity filter motif is present at residues 46–51 (TVGYGD). A helical transmembrane segment spans residues 61 to 81 (LSVIIYIFAGVGAVAYTMGNI). Residues 82-333 (ASFFIEGHFR…KLKRYVEGVE (252 aa)) are Cytoplasmic-facing. The region spanning 107–229 (NNHYIICGYG…GADRAVCPYI (123 aa)) is the RCK N-terminal domain. One can recognise an RCK C-terminal domain in the interval 246–331 (EFIHSLVATE…LEKLKRYVEG (86 aa)).

In terms of assembly, homotetramer.

Its subcellular location is the cell membrane. Potassium channel protein. Seems to conduct potassium at low membrane potentials. This is Potassium channel protein 1 from Methanocaldococcus jannaschii (strain ATCC 43067 / DSM 2661 / JAL-1 / JCM 10045 / NBRC 100440) (Methanococcus jannaschii).